The sequence spans 246 residues: Acetoacetyl-CoA reductase (246 aa).

NADP(+) is bound by residues 12–14 and 88–92; these read GGI and CAGIT. Substrate contacts are provided by residues aspartate 94 and 147–150; that span reads QFGQ. Tyrosine 153 functions as the Proton acceptor in the catalytic mechanism. 183-186 provides a ligand contact to NADP(+); sequence PGYV. Residue 184–185 participates in substrate binding; sequence GY.

It belongs to the short-chain dehydrogenases/reductases (SDR) family.

The protein localises to the cytoplasm. It catalyses the reaction a (3R)-3-hydroxyacyl-CoA + NADP(+) = a 3-oxoacyl-CoA + NADPH + H(+). It participates in biopolymer metabolism; poly-(R)-3-hydroxybutanoate biosynthesis. The chain is Acetoacetyl-CoA reductase from Allochromatium vinosum (strain ATCC 17899 / DSM 180 / NBRC 103801 / NCIMB 10441 / D) (Chromatium vinosum).